The sequence spans 69 residues: Guanine nucleotide-binding protein G(I)/G(S)/G(O) subunit gamma-T2 (69 aa).

Cysteine 66 is modified (cysteine methyl ester). Residue cysteine 66 is the site of S-farnesyl cysteine attachment. Residues 67 to 69 constitute a propeptide, removed in mature form; it reads IIS.

Belongs to the G protein gamma family. As to quaternary structure, g proteins are composed of 3 units, alpha, beta and gamma.

The protein resides in the cell membrane. Functionally, guanine nucleotide-binding proteins (G proteins) are involved as a modulator or transducer in various transmembrane signaling systems. The beta and gamma chains are required for the GTPase activity, for replacement of GDP by GTP, and for G protein-effector interaction. The protein is Guanine nucleotide-binding protein G(I)/G(S)/G(O) subunit gamma-T2 (GNGT2) of Bos taurus (Bovine).